A 58-amino-acid chain; its full sequence is Small ribosomal subunit protein bS21C (58 aa).

The tract at residues 38–58 is disordered; it reads YEKPSLRRKRKAEAARKGGRY. Basic and acidic residues predominate over residues 49–58; that stretch reads AEAARKGGRY.

This sequence belongs to the bacterial ribosomal protein bS21 family.

This Nostoc sp. (strain PCC 7120 / SAG 25.82 / UTEX 2576) protein is Small ribosomal subunit protein bS21C (rpsU3).